Reading from the N-terminus, the 175-residue chain is General odorant-binding protein 84a (175 aa).

Positions 1-24 (MYSALVRACAVIAFLILSPNCARA) are cleaved as a signal peptide. 2 disulfides stabilise this stretch: cysteine 103–cysteine 151 and cysteine 140–cysteine 160.

As to expression, present only in a small number of hairs scattered over the surface of the funiculus.

The protein localises to the secreted. This Drosophila melanogaster (Fruit fly) protein is General odorant-binding protein 84a (Obp84a).